The following is a 1844-amino-acid chain: MAFQLALDALAPTTHRDPSLHPILESTVDSIRSSIQTYPWSIPKELLPLLNSYGIPTSGLGTSHHPHAAHKTIETFLLCTHWSFQATTPSSVMFMKPSKFNKLAQVNSNFRELKNYRLHPNDSTRYPFTSPDLPVFPTIFMHDALMYYHPSQIMDLFLQKPNLERLYASLVVPPEAHLSDQSFFPKLYTYTTTRHTLHYVPEGHEAGSYNQPSDAHSWLRINSIRLGNHHLSVTILESWGPVHSLLIQRGTPPPDPSLQAPSTPMASDLFRSYQEPRLDVVSFRIPDAIELPQATFLQQPLRDRLVPRAVYNALFTYTRAVRTLRTSDPAAFVRMHSSKPDHDWVTSNAWDNLQTFALLNVPLRPNVVYHVLQSPIASLALYLRQHWRRLTATAVPILSFLTLLQRFLPLPIPLAEVKSITAFRRELYRKKAPHHPLDVFHLQQHLRNHHSAISAVRPASPPHQRLPHALQKAALLLLRPISPLLTATPFFRSEQKSMLPNAELSWTLKRFALPWQASLVLLSLSESSVLLHKLFSPPTLQAQHDTYHRHLHPGSYSLQWERTPLSIPRTTAFLPFTPTTSTAPPDHSEASLPPAFASTSVPRPPPVASSLGAQPPTTTAAPPTPIEPTQRAHQNSDLTLESSTPIEPPPPPIQSSDIPPSAPVLFPEINSPHRFSPKLPTTPDFEPTRTSPPPSTSHQDSTDPADPLMGSHLLHHSLPAPPTHPLQSSQLLPAPLTNDPTAIGPVLPFEELHPRRYPENTATFLTRLRSLPSNHLPQPTLNCLLSAVSDQTKVSEDHLWESLQTILPDSQLRNEEINSLGLSTEHLTALAHLYNFQATIYSDRGPILFGPSDTIKRIDITHTTGPPSHFSPGKRLLGSQPSAKGHPSDSLIRAMKSFKVSGNYLPFSEAHNHPTSISHAKNLVSNMKNGFDGILSLLDVSTGQRTGPTPKDAIIQIDHYLDTNPGKTTPVVHFAGFAGCGKTYPIQQLLKTKLFKDFRVSCPTTELRTEWKTAMELHGSQSWRFNTWESSILKSSRILVIDEIYKMPRGYLDLSILADPALELVIILGDPLQGEYHSQSKDSSNHRLPSETLRLLPYIDMYCWWSYRIPQCIARLFQIHSFNAWQGIIGSVSTPQDQSPVLTNSHASSLTFNSLGYRSCTISSSQGLTFCDPAIIVLDNYTKWLSSANGLVALTRSRSGVQFMGPSSYVGGTNGSSAMFSDAFNNSLIIMDRYFPSLFPQLKLITSPLTTRSPKLNGATPSASPTHRSPNFHLPPHIPLSYDRDFVTVNPTLPDQGPETRLDTHFLPPSRLPLHFDLPPAITPPPISTSVDPPQAKASPVYPGEFFDSLAAFFLPAHDPSTREVLHKDQSSNQFPWFDRPFSLSCQPSSLISAKHAPNHDPTLLPASINKRLRFRPSEAPHQITADDVVLGLQLFHSLCRAYSRQPNITVPFNPELFAECISLNEYAQLSSKTQSTIVANASRSDPDWRHTTVKIFAKAQHKVNDGSIFGSWKACQTLALMHDYVILVLGPVKKYQRIFDNVDRPSHIYSHCGKTPNQLRDWCQEHLTHSTPKIANDYTAFDQSQHGESVVLEALKMKRLNIPSHLIQLHVHLKTNVSTQFGPLTCMRLTGEPGTYDDNTDYNLAVIYSQYDVGSCPIMVSGDDSLIDHPLPTRHDWPSVLKRLHLRFKLELTSHPLFCGYYVGPAGCIRNPLALFCKLMIAVDDDALDDRRLSYLTEFTTGHLLGESLWHLLPETHVQYQSACFDFFCRRCPKHEKMLLDDSTPTLSLLERITSSPRWLTKNAMYLLPAKLRLAITSLSQTQSFPESIEVSHAESELLHYVQ.

Positions 58–219 (SGLGTSHHPH…NQPSDAHSWL (162 aa)) constitute an Alphavirus-like MT domain. Positions 571–739 (TAFLPFTPTT…QLLPAPLTND (169 aa)) are disordered. The segment covering 631 to 641 (RAHQNSDLTLE) has biased composition (polar residues). The span at 725–736 (PLQSSQLLPAPL) shows a compositional bias: low complexity. The region spanning 728 to 879 (SSQLLPAPLT…FSPGKRLLGS (152 aa)) is the OTU domain. Residues 730–884 (QLLPAPLTND…RLLGSQPSAK (155 aa)) form the Peptidase C21 domain. The active-site For protease activity is the cysteine 783. Positions 860-888 (ITHTTGPPSHFSPGKRLLGSQPSAKGHPS) are disordered. The GPP flap signature appears at 865-867 (GPP). Histidine 869 serves as the catalytic For protease activity. The 158-residue stretch at 946 to 1103 (TGPTPKDAII…RLLPYIDMYC (158 aa)) folds into the (+)RNA virus helicase ATP-binding domain. 976–983 (GFAGCGKT) is a binding site for a ribonucleoside 5'-triphosphate. The 133-residue stretch at 1104–1236 (WWSYRIPQCI…SLIIMDRYFP (133 aa)) folds into the (+)RNA virus helicase C-terminal domain. Residues 1572–1678 (TPKIANDYTA…DHPLPTRHDW (107 aa)) enclose the RdRp catalytic domain.

The protein belongs to the Tymoviridae non-structural replication polyprotein family. Interacts with host ubiquitin. Specific enzymatic cleavages by the host yield mature proteins.

Its subcellular location is the host chloroplast envelope. The enzyme catalyses Thiol-dependent hydrolysis of ester, thioester, amide, peptide and isopeptide bonds formed by the C-terminal Gly of ubiquitin (a 76-residue protein attached to proteins as an intracellular targeting signal).. It catalyses the reaction RNA(n) + a ribonucleoside 5'-triphosphate = RNA(n+1) + diphosphate. In terms of biological role, acts as a cysteine protease, methyltransferase and deubiquitinase. The cysteine protease activity cleaves the polyprotein giving rise to mature proteins. The protease has the ability to process substrates in trans. The methyltransferase domain is probably involved in viral RNA capping. The deubiquitylating activity counteracts the degradation of the viral polymerase mediated by the host ubiquitin-proteasome system. The polymerase is thus stabilized and infectivity is increased. Favors K63 poly-Ub linkage. RNA-directed RNA polymerase is responsible for the replication and transcription of the genome. In Turnip yellow mosaic virus (isolate Australia), this protein is Non-structural replication polyprotein.